We begin with the raw amino-acid sequence, 137 residues long: Nuclear transition protein 2 (137 aa).

Polar residues predominate over residues 1–21 (MDTKTQSLPNAHTQPHSNSGP). Positions 1–137 (MDTKTQSLPN…KRRSSGRKYN (137 aa)) are disordered. Zn(2+)-binding residues include H12, H16, H24, C29, C31, C35, and C38. A compositionally biased stretch (low complexity) spans 22-74 (QSHACNQCSCSHHCQNCSQSCDRSQSCSRSRSSSQSPTGHRSLPGHQSQSLSP). Positions 78-91 (PRHRKRAMHSHRCP) are enriched in basic residues. The Nuclear localization signal signature appears at 110-118 (GKANKRKGI). Residues 126-137 (KTKRRSSGRKYN) are compositionally biased toward basic residues. A Phosphoserine modification is found at S132.

Belongs to the nuclear transition protein 2 family. Testis. Expression is restricted to haploid germ cells.

It is found in the nucleus. Its subcellular location is the nucleolus. The protein resides in the chromosome. Its function is as follows. Plays a key role in the replacement of histones to protamine in the elongating spermatids of mammals. In condensing spermatids, loaded onto the nucleosomes, where it promotes the recruitment and processing of protamines, which are responsible for histone eviction. This chain is Nuclear transition protein 2 (TNP2), found in Sus scrofa (Pig).